Here is a 514-residue protein sequence, read N- to C-terminus: 2,3-bisphosphoglycerate-independent phosphoglycerate mutase (514 aa).

Mn(2+)-binding residues include D14 and S64. Residue S64 is the Phosphoserine intermediate of the active site. Substrate-binding positions include H125, 155–156 (RD), R187, R193, 263–266 (RADR), and K336. Mn(2+)-binding residues include D403, H407, D444, H445, and H463.

It belongs to the BPG-independent phosphoglycerate mutase family. In terms of assembly, monomer. Requires Mn(2+) as cofactor.

It carries out the reaction (2R)-2-phosphoglycerate = (2R)-3-phosphoglycerate. It functions in the pathway carbohydrate degradation; glycolysis; pyruvate from D-glyceraldehyde 3-phosphate: step 3/5. Functionally, catalyzes the interconversion of 2-phosphoglycerate and 3-phosphoglycerate. In Shewanella sediminis (strain HAW-EB3), this protein is 2,3-bisphosphoglycerate-independent phosphoglycerate mutase.